The chain runs to 61 residues: Conotoxin Tx-D021 (61 aa).

Residues 1–22 form the signal peptide; that stretch reads MRCLPVFVILLLLIASTPSVDA. The propeptide occupies 23-48; that stretch reads RAKTRDDMSLASFHDDAKRILQILQD. At C60 the chain carries Cysteine amide.

This sequence belongs to the conotoxin T superfamily. Contains 2 disulfide bonds that can be either 'C1-C3, C2-C4' or 'C1-C4, C2-C3', since these disulfide connectivities have been observed for conotoxins with cysteine framework V (for examples, see AC P0DQQ7 and AC P81755). In terms of tissue distribution, expressed by the venom duct.

It localises to the secreted. This Conus textile (Cloth-of-gold cone) protein is Conotoxin Tx-D021.